The sequence spans 747 residues: Mediator of RNA polymerase II transcription subunit 25 (747 aa).

Residues 1–226 are interaction with the Mediator complex; it reads MVPGSEGPAR…PRHMVLVRGL (226 aa). 2 disordered regions span residues 233–274 and 299–390; these read GSAP…QYQV and LGPR…PALG. Composition is skewed to pro residues over residues 263–272 and 326–342; these read QPLPPVPPQY and PQLP…PPAS. The interaction with VP16 stretch occupies residues 389–543; it reads LGGQQSVSNK…VNGIRQVITN (155 aa). An interaction with CREBBP region spans residues 395–545; it reads VSNKLLAWSG…GIRQVITNHK (151 aa). The disordered stretch occupies residues 548–747; it reads QQQKLEQQQR…MEDDILMDLI (200 aa). 2 interaction with RARA regions span residues 564-653 and 640-707; these read APPG…LLNP and PGAN…WPAQ. The segment covering 598 to 611 has biased composition (low complexity); that stretch reads ASGATGQPQPQGTA. Residues 612 to 634 are compositionally biased toward pro residues; that stretch reads QPPPGAPQGPPGAASGPPPPGPI. The LXXLL motif signature appears at 646–650; that stretch reads LRSLL. Pro residues-rich tracts occupy residues 652 to 664, 673 to 683, and 691 to 713; these read NPPP…PPPQ, PGAPALLPPPH, and LGPP…PRAP. Position 725 is an asymmetric dimethylarginine (Arg725). Residues 738-747 are compositionally biased toward acidic residues; the sequence is MEDDILMDLI.

Belongs to the Mediator complex subunit 25 family. In terms of assembly, component of the Mediator complex, which is composed of MED1, MED4, MED6, MED7, MED8, MED9, MED10, MED11, MED12, MED13, MED13L, MED14, MED15, MED16, MED17, MED18, MED19, MED20, MED21, MED22, MED23, MED24, MED25, MED26, MED27, MED29, MED30, MED31, CCNC, CDK8 and CDC2L6/CDK11. The MED12, MED13, CCNC and CDK8 subunits form a distinct module termed the CDK8 module. Mediator containing the CDK8 module is less active than Mediator lacking this module in supporting transcriptional activation. Individual preparations of the Mediator complex lacking one or more distinct subunits have been variously termed ARC, CRSP, DRIP, PC2, SMCC and TRAP. Interacts with CREBBP. Interacts with ESR1, GR, RARA, RXRA and THRB in a ligand-dependent fashion. Binds the Herpes simplex virus activator VP16. In terms of tissue distribution, ubiquitously expressed. Highest levels in brain, heart, kidney, peripheral leukocytes, placenta, skeletal muscle and spleen.

The protein resides in the nucleus. Functionally, component of the Mediator complex, a coactivator involved in the regulated transcription of nearly all RNA polymerase II-dependent genes. Mediator functions as a bridge to convey information from gene-specific regulatory proteins to the basal RNA polymerase II transcription machinery. Mediator is recruited to promoters by direct interactions with regulatory proteins and serves as a scaffold for the assembly of a functional preinitiation complex with RNA polymerase II and the general transcription factors. Required for RARA/RXRA-mediated transcription. This Homo sapiens (Human) protein is Mediator of RNA polymerase II transcription subunit 25 (MED25).